We begin with the raw amino-acid sequence, 519 residues long: F-box-like/WD repeat-containing protein TBL1XR1-A (519 aa).

The LisH domain occupies 4–36 (SSDEVNFLVYRYLQESGFSHSAFTFGIESHISQ). The 46-residue stretch at 41 to 86 (GALAPPAALISIIQKGLQYVEAEVSINEDGTLFDGRPIESLSLIDA) folds into the F-box-like domain. Low complexity predominate over residues 115-139 (AAAAAATPNNQQPPAKNGENTANGE). Residues 115-147 (AAAAAATPNNQQPPAKNGENTANGEENGGHALA) form a disordered region. WD repeat units lie at residues 172-211 (GHES…TSGS), 228-267 (PSNK…ASTL), 269-308 (QHKG…AKQQ), 311-349 (FHSA…PIKT), 352-391 (GHTN…CVHD), 394-442 (AHNK…CIHT), 445-484 (KHQE…LVHS), and 486-519 (RGTG…DLRK).

The protein belongs to the WD repeat EBI family. Interacts with heterodimers of rxra and thrb, and this interaction is abrogated by thyroid hormone binding to thrb. Interacts with ncor1.

The protein localises to the nucleus. F-box-like protein which acts as an integral component of the N-CoR transcriptional corepressor complex. Probably regulates transcription activation mediated by nuclear receptors. May mediate the recruitment of the 19S proteasome complex, leading to the subsequent proteasomal degradation of the N-CoR complex, thereby allowing cofactor exchange and transcription activation. In Xenopus laevis (African clawed frog), this protein is F-box-like/WD repeat-containing protein TBL1XR1-A (tbl1xr1-a).